The following is a 162-amino-acid chain: MQHLVLIGFMGSGKSSLAQELGLALKLEVLDTDMIISERVGLSVREIFEELGEDNFRMFEKNLIDELKTLKTPHVISTGGGIVMHDNLKGLGTTFYLKMDFETLIKRLNQKEREKRPLLNDLTQAKELFEKRQALYEKNASFIIDARGGLNNSLKQVLQFIA.

ATP is bound at residue 11–16 (GSGKSS). Serine 15 serves as a coordination point for Mg(2+). 3 residues coordinate substrate: aspartate 33, arginine 57, and glycine 80. Arginine 116 lines the ATP pocket. Residue arginine 132 participates in substrate binding.

It belongs to the shikimate kinase family. Monomer. Mg(2+) serves as cofactor.

The protein localises to the cytoplasm. It carries out the reaction shikimate + ATP = 3-phosphoshikimate + ADP + H(+). It participates in metabolic intermediate biosynthesis; chorismate biosynthesis; chorismate from D-erythrose 4-phosphate and phosphoenolpyruvate: step 5/7. Catalyzes the specific phosphorylation of the 3-hydroxyl group of shikimic acid using ATP as a cosubstrate. In Helicobacter pylori (strain P12), this protein is Shikimate kinase.